The sequence spans 318 residues: D-alanine--D-alanine ligase B (318 aa).

The ATP-grasp domain occupies 117–315; that stretch reads KQVWLSLGLS…FEALVWRVLE (199 aa). 146–201 is a binding site for ATP; sequence AEQIGLPVIVKPANEGSSVGVSRVFDQAQLDEAVTLAARYDGALLMEQLIEGDELT. Positions 268, 282, and 284 each coordinate Mg(2+).

This sequence belongs to the D-alanine--D-alanine ligase family. The cofactor is Mg(2+). Mn(2+) serves as cofactor.

It localises to the cytoplasm. It catalyses the reaction 2 D-alanine + ATP = D-alanyl-D-alanine + ADP + phosphate + H(+). Its pathway is cell wall biogenesis; peptidoglycan biosynthesis. Functionally, cell wall formation. In Xanthomonas campestris pv. campestris (strain ATCC 33913 / DSM 3586 / NCPPB 528 / LMG 568 / P 25), this protein is D-alanine--D-alanine ligase B.